A 391-amino-acid polypeptide reads, in one-letter code: Saxitoxin and tetrodotoxin-binding protein 1 (391 aa).

The signal sequence occupies residues 1–20 (MGAVPGVVLLLMLAVLGIRA). A run of 2 repeats spans residues 24 to 202 (PEEC…HKKS) and 203 to 391 (PEEC…PEQD). Asparagine 54, asparagine 63, asparagine 97, asparagine 234, asparagine 268, asparagine 277, and asparagine 307 each carry an N-linked (GlcNAc...) asparagine glycan.

As to quaternary structure, homodimer or heterodimer of PSTBP1 and PSTBP2. Post-translationally, glycosylated.

The protein resides in the secreted. In terms of biological role, binds both saxitoxin and tetradotoxin. May play a role in toxin accumulation and/or excretion. The chain is Saxitoxin and tetrodotoxin-binding protein 1 (psbp1) from Takifugu pardalis (Panther puffer).